The chain runs to 307 residues: Glycerol-3-phosphate dehydrogenase [NAD(P)+] (307 aa).

Positions 11, 31, and 95 each coordinate NADPH. Positions 95, 121, and 123 each coordinate sn-glycerol 3-phosphate. An NADPH-binding site is contributed by Ala125. Residues Lys176, Asp229, Ser239, Arg240, and Asn241 each contribute to the sn-glycerol 3-phosphate site. Lys176 functions as the Proton acceptor in the catalytic mechanism. Arg240 provides a ligand contact to NADPH. Residue Glu261 participates in NADPH binding.

The protein belongs to the NAD-dependent glycerol-3-phosphate dehydrogenase family.

It localises to the cytoplasm. It catalyses the reaction sn-glycerol 3-phosphate + NAD(+) = dihydroxyacetone phosphate + NADH + H(+). The catalysed reaction is sn-glycerol 3-phosphate + NADP(+) = dihydroxyacetone phosphate + NADPH + H(+). It participates in membrane lipid metabolism; glycerophospholipid metabolism. Catalyzes the reduction of the glycolytic intermediate dihydroxyacetone phosphate (DHAP) to sn-glycerol 3-phosphate (G3P), the key precursor for phospholipid synthesis. The chain is Glycerol-3-phosphate dehydrogenase [NAD(P)+] from Jannaschia sp. (strain CCS1).